The primary structure comprises 343 residues: Methionine import ATP-binding protein MetN 1 (343 aa).

The ABC transporter domain maps to 2–241 (IKLSNITKVF…PKTPLAQKFI (240 aa)). 38–45 (GASGAGKS) lines the ATP pocket.

This sequence belongs to the ABC transporter superfamily. Methionine importer (TC 3.A.1.24) family. As to quaternary structure, the complex is composed of two ATP-binding proteins (MetN), two transmembrane proteins (MetI) and a solute-binding protein (MetQ).

The protein resides in the cell inner membrane. It catalyses the reaction L-methionine(out) + ATP + H2O = L-methionine(in) + ADP + phosphate + H(+). The enzyme catalyses D-methionine(out) + ATP + H2O = D-methionine(in) + ADP + phosphate + H(+). Its function is as follows. Part of the ABC transporter complex MetNIQ involved in methionine import. Responsible for energy coupling to the transport system. This chain is Methionine import ATP-binding protein MetN 1, found in Salmonella choleraesuis (strain SC-B67).